The chain runs to 329 residues: GTPase Obg (329 aa).

The 159-residue stretch at 2 to 160 folds into the Obg domain; the sequence is YNFKDSVSIT…LNVRLELFLV (159 aa). The OBG-type G domain occupies 161–327; it reads ADIGLVGPPN…LIKEFFILAK (167 aa). GTP is bound by residues 167–174, 192–196, 213–216, 280–283, and 308–310; these read GPPNAGKS, FTTKI, DIPG, NKLD, and SIY. The Mg(2+) site is built by serine 174 and threonine 194.

It belongs to the TRAFAC class OBG-HflX-like GTPase superfamily. OBG GTPase family. Monomer. The cofactor is Mg(2+).

The protein resides in the cytoplasm. Its function is as follows. An essential GTPase which binds GTP, GDP and possibly (p)ppGpp with moderate affinity, with high nucleotide exchange rates and a fairly low GTP hydrolysis rate. Plays a role in control of the cell cycle, stress response, ribosome biogenesis and in those bacteria that undergo differentiation, in morphogenesis control. This chain is GTPase Obg, found in Borrelia garinii subsp. bavariensis (strain ATCC BAA-2496 / DSM 23469 / PBi) (Borreliella bavariensis).